A 237-amino-acid polypeptide reads, in one-letter code: Lipoprotein-releasing system ATP-binding protein LolD (237 aa).

One can recognise an ABC transporter domain in the interval 16–237 (LKCEGLTRIY…LDQGRLSEDA (222 aa)). 52–59 (GSSGSGKT) is an ATP binding site.

The protein belongs to the ABC transporter superfamily. Lipoprotein translocase (TC 3.A.1.125) family. The complex is composed of two ATP-binding proteins (LolD) and two transmembrane proteins (LolC and LolE).

Its subcellular location is the cell inner membrane. Its function is as follows. Part of the ABC transporter complex LolCDE involved in the translocation of mature outer membrane-directed lipoproteins, from the inner membrane to the periplasmic chaperone, LolA. Responsible for the formation of the LolA-lipoprotein complex in an ATP-dependent manner. The polypeptide is Lipoprotein-releasing system ATP-binding protein LolD (Chromohalobacter salexigens (strain ATCC BAA-138 / DSM 3043 / CIP 106854 / NCIMB 13768 / 1H11)).